The primary structure comprises 119 residues: Large ribosomal subunit protein uL18 (119 aa).

It belongs to the universal ribosomal protein uL18 family. Part of the 50S ribosomal subunit; part of the 5S rRNA/L5/L18/L25 subcomplex. Contacts the 5S and 23S rRNAs.

In terms of biological role, this is one of the proteins that bind and probably mediate the attachment of the 5S RNA into the large ribosomal subunit, where it forms part of the central protuberance. This chain is Large ribosomal subunit protein uL18, found in Chlorobium phaeovibrioides (strain DSM 265 / 1930) (Prosthecochloris vibrioformis (strain DSM 265)).